Reading from the N-terminus, the 159-residue chain is Cyclic pyranopterin monophosphate synthase (159 aa).

Substrate contacts are provided by residues 75 to 77 and 113 to 114; these read LCH and ME. Asp-128 is a catalytic residue.

The protein belongs to the MoaC family. Homohexamer; trimer of dimers.

It carries out the reaction (8S)-3',8-cyclo-7,8-dihydroguanosine 5'-triphosphate = cyclic pyranopterin phosphate + diphosphate. Its pathway is cofactor biosynthesis; molybdopterin biosynthesis. Its function is as follows. Catalyzes the conversion of (8S)-3',8-cyclo-7,8-dihydroguanosine 5'-triphosphate to cyclic pyranopterin monophosphate (cPMP). This Photorhabdus laumondii subsp. laumondii (strain DSM 15139 / CIP 105565 / TT01) (Photorhabdus luminescens subsp. laumondii) protein is Cyclic pyranopterin monophosphate synthase.